Reading from the N-terminus, the 116-residue chain is Large ribosomal subunit protein bL20 (116 aa).

It belongs to the bacterial ribosomal protein bL20 family.

Functionally, binds directly to 23S ribosomal RNA and is necessary for the in vitro assembly process of the 50S ribosomal subunit. It is not involved in the protein synthesizing functions of that subunit. The chain is Large ribosomal subunit protein bL20 from Helicobacter pylori (strain HPAG1).